The following is a 72-amino-acid chain: Putative beta-neurotoxin (72 aa).

The first 7 residues, 1-7 (IDMVVEC), serve as a signal peptide directing secretion. Residues 9–71 (KDGYLMEHDG…TWSRATNRCG (63 aa)) enclose the LCN-type CS-alpha/beta domain. 4 disulfide bridges follow: Cys-19–Cys-70, Cys-23–Cys-45, Cys-31–Cys-51, and Cys-35–Cys-53.

As to expression, expressed by the venom gland.

It localises to the secreted. Beta toxins bind voltage-independently at site-4 of sodium channels (Nav) and shift the voltage of activation toward more negative potentials thereby affecting sodium channel activation and promoting spontaneous and repetitive firing. This Tityus pachyurus (Colombian scorpion) protein is Putative beta-neurotoxin.